The chain runs to 281 residues: Ribosomal RNA small subunit methyltransferase A (281 aa).

6 residues coordinate S-adenosyl-L-methionine: asparagine 36, leucine 38, glycine 63, glutamate 84, aspartate 109, and asparagine 127.

This sequence belongs to the class I-like SAM-binding methyltransferase superfamily. rRNA adenine N(6)-methyltransferase family. RsmA subfamily.

It localises to the cytoplasm. It catalyses the reaction adenosine(1518)/adenosine(1519) in 16S rRNA + 4 S-adenosyl-L-methionine = N(6)-dimethyladenosine(1518)/N(6)-dimethyladenosine(1519) in 16S rRNA + 4 S-adenosyl-L-homocysteine + 4 H(+). Functionally, specifically dimethylates two adjacent adenosines (A1518 and A1519) in the loop of a conserved hairpin near the 3'-end of 16S rRNA in the 30S particle. May play a critical role in biogenesis of 30S subunits. This is Ribosomal RNA small subunit methyltransferase A from Borreliella burgdorferi (strain ATCC 35210 / DSM 4680 / CIP 102532 / B31) (Borrelia burgdorferi).